Reading from the N-terminus, the 608-residue chain is UvrABC system protein C (608 aa).

One can recognise a GIY-YIG domain in the interval 16–94 (NRPGVYRMFD…IKEWRPPYNI (79 aa)). The UVR domain maps to 204 to 239 (NALADELNTGMEQAAMRLDFEKAAELRDQVAILRRV).

Belongs to the UvrC family. In terms of assembly, interacts with UvrB in an incision complex.

The protein resides in the cytoplasm. Functionally, the UvrABC repair system catalyzes the recognition and processing of DNA lesions. UvrC both incises the 5' and 3' sides of the lesion. The N-terminal half is responsible for the 3' incision and the C-terminal half is responsible for the 5' incision. The protein is UvrABC system protein C of Pseudomonas paraeruginosa (strain DSM 24068 / PA7) (Pseudomonas aeruginosa (strain PA7)).